Consider the following 146-residue polypeptide: Hemoglobin subunit beta-2 (146 aa).

One can recognise a Globin domain in the interval 2 to 146 (EWTNFERATI…VVSSLGKQYH (145 aa)). The heme b site is built by His-63 and His-92.

Belongs to the globin family. Hb2 is a heterotetramer of two alpha chains and two beta-2 chains. Red blood cells.

Functionally, involved in oxygen transport from gills to the various peripheral tissues. The chain is Hemoglobin subunit beta-2 (hbb2) from Cygnodraco mawsoni (Antarctic dragonfish).